Here is a 464-residue protein sequence, read N- to C-terminus: Alpha-amylase (464 aa).

An N-terminal signal peptide occupies residues 1-21 (MKNTAGILAIAGMLIAPLAHA). Residues His107 and Arg213 each coordinate substrate. Asp215 acts as the Nucleophile in catalysis. 218 to 219 (KH) serves as a coordination point for substrate. Glu242 functions as the Proton donor in the catalytic mechanism. Positions 247 and 313 each coordinate substrate.

The protein belongs to the glycosyl hydrolase 13 family.

The protein resides in the secreted. The catalysed reaction is Endohydrolysis of (1-&gt;4)-alpha-D-glucosidic linkages in polysaccharides containing three or more (1-&gt;4)-alpha-linked D-glucose units.. This Aeromonas hydrophila protein is Alpha-amylase.